The chain runs to 656 residues: UvrABC system protein B (656 aa).

Residues 24-409 (QGVRNRTPSQ…QGHIVEQILR (386 aa)) enclose the Helicase ATP-binding domain. 37–44 (GTTGSGKT) provides a ligand contact to ATP. The short motif at 90–113 (YYDYYQPEAYIARNDTYIEKSLLI) is the Beta-hairpin element. The Helicase C-terminal domain occupies 426–589 (QVDDLLEEIR…ITPKPIIKAI (164 aa)). Residues 616–651 (EKLIKKYENLMLQAANAFRFDEAAQYRDKMKAAKEQ) enclose the UVR domain.

This sequence belongs to the UvrB family. In terms of assembly, forms a heterotetramer with UvrA during the search for lesions. Interacts with UvrC in an incision complex.

Its subcellular location is the cytoplasm. The UvrABC repair system catalyzes the recognition and processing of DNA lesions. A damage recognition complex composed of 2 UvrA and 2 UvrB subunits scans DNA for abnormalities. Upon binding of the UvrA(2)B(2) complex to a putative damaged site, the DNA wraps around one UvrB monomer. DNA wrap is dependent on ATP binding by UvrB and probably causes local melting of the DNA helix, facilitating insertion of UvrB beta-hairpin between the DNA strands. Then UvrB probes one DNA strand for the presence of a lesion. If a lesion is found the UvrA subunits dissociate and the UvrB-DNA preincision complex is formed. This complex is subsequently bound by UvrC and the second UvrB is released. If no lesion is found, the DNA wraps around the other UvrB subunit that will check the other stand for damage. This Chlamydia abortus (strain DSM 27085 / S26/3) (Chlamydophila abortus) protein is UvrABC system protein B.